The following is a 464-amino-acid chain: Potassium/proton antiporter CemA (464 aa).

The next 5 helical transmembrane spans lie at 36-56 (FSLS…TEIL), 241-261 (ASVS…QIAI), 341-361 (LLLR…LLIF), 389-409 (ILLL…EILV), and 425-445 (TPCF…YWIF).

Belongs to the CemA family.

The protein localises to the plastid. It is found in the chloroplast inner membrane. The catalysed reaction is K(+)(in) + H(+)(out) = K(+)(out) + H(+)(in). In terms of biological role, contributes to K(+)/H(+) antiport activity by supporting proton efflux to control proton extrusion and homeostasis in chloroplasts in a light-dependent manner to modulate photosynthesis. Prevents excessive induction of non-photochemical quenching (NPQ) under continuous-light conditions. Indirectly promotes efficient inorganic carbon uptake into chloroplasts. The sequence is that of Potassium/proton antiporter CemA from Adiantum capillus-veneris (Maidenhair fern).